A 246-amino-acid polypeptide reads, in one-letter code: Putative 4'-phosphopantetheinyl transferase slr0495 (246 aa).

Residues Asp-110 and Glu-156 each coordinate Mg(2+).

Belongs to the P-Pant transferase superfamily. Gsp/Sfp/HetI/AcpT family. Requires Mg(2+) as cofactor.

Functionally, probably transfers the 4'-phosphopantetheine moiety from coenzyme A (CoA) to a serine residue of a carrier protein domain. This is Putative 4'-phosphopantetheinyl transferase slr0495 from Synechocystis sp. (strain ATCC 27184 / PCC 6803 / Kazusa).